We begin with the raw amino-acid sequence, 199 residues long: Nucleoside triphosphate pyrophosphatase (199 aa).

Asp-76 functions as the Proton acceptor in the catalytic mechanism.

Belongs to the Maf family. A divalent metal cation is required as a cofactor.

The protein localises to the cytoplasm. It catalyses the reaction a ribonucleoside 5'-triphosphate + H2O = a ribonucleoside 5'-phosphate + diphosphate + H(+). The catalysed reaction is a 2'-deoxyribonucleoside 5'-triphosphate + H2O = a 2'-deoxyribonucleoside 5'-phosphate + diphosphate + H(+). Nucleoside triphosphate pyrophosphatase. May have a dual role in cell division arrest and in preventing the incorporation of modified nucleotides into cellular nucleic acids. The sequence is that of Nucleoside triphosphate pyrophosphatase from Caulobacter vibrioides (strain ATCC 19089 / CIP 103742 / CB 15) (Caulobacter crescentus).